A 476-amino-acid chain; its full sequence is Argininosuccinate lyase (476 aa).

Belongs to the lyase 1 family. Argininosuccinate lyase subfamily.

The protein localises to the cytoplasm. The enzyme catalyses 2-(N(omega)-L-arginino)succinate = fumarate + L-arginine. It functions in the pathway amino-acid biosynthesis; L-arginine biosynthesis; L-arginine from L-ornithine and carbamoyl phosphate: step 3/3. This chain is Argininosuccinate lyase, found in Gluconacetobacter diazotrophicus (strain ATCC 49037 / DSM 5601 / CCUG 37298 / CIP 103539 / LMG 7603 / PAl5).